The primary structure comprises 259 residues: Ribonuclease HII (259 aa).

One can recognise an RNase H type-2 domain in the interval 70 to 258; the sequence is TLIVGIDEVG…VKSLVLGKKE (189 aa). A divalent metal cation contacts are provided by Asp-76, Glu-77, and Asp-168.

The protein belongs to the RNase HII family. The cofactor is Mn(2+). Requires Mg(2+) as cofactor.

Its subcellular location is the cytoplasm. The enzyme catalyses Endonucleolytic cleavage to 5'-phosphomonoester.. Endonuclease that specifically degrades the RNA of RNA-DNA hybrids. This Streptococcus pneumoniae (strain ATCC 700669 / Spain 23F-1) protein is Ribonuclease HII.